The primary structure comprises 337 residues: Glucokinase (337 aa).

11–16 is an ATP binding site; that stretch reads ADIGGT.

It belongs to the bacterial glucokinase family.

Its subcellular location is the cytoplasm. The enzyme catalyses D-glucose + ATP = D-glucose 6-phosphate + ADP + H(+). In Xylella fastidiosa (strain M12), this protein is Glucokinase.